The primary structure comprises 598 residues: DNA mismatch repair protein MutL (598 aa).

The protein belongs to the DNA mismatch repair MutL/HexB family.

Functionally, this protein is involved in the repair of mismatches in DNA. It is required for dam-dependent methyl-directed DNA mismatch repair. May act as a 'molecular matchmaker', a protein that promotes the formation of a stable complex between two or more DNA-binding proteins in an ATP-dependent manner without itself being part of a final effector complex. This is DNA mismatch repair protein MutL from Geotalea daltonii (strain DSM 22248 / JCM 15807 / FRC-32) (Geobacter daltonii).